The primary structure comprises 135 residues: ATP synthase epsilon chain (135 aa).

This sequence belongs to the ATPase epsilon chain family. In terms of assembly, F-type ATPases have 2 components, CF(1) - the catalytic core - and CF(0) - the membrane proton channel. CF(1) has five subunits: alpha(3), beta(3), gamma(1), delta(1), epsilon(1). CF(0) has three main subunits: a, b and c.

It is found in the cell inner membrane. In terms of biological role, produces ATP from ADP in the presence of a proton gradient across the membrane. The protein is ATP synthase epsilon chain of Bradyrhizobium sp. (strain BTAi1 / ATCC BAA-1182).